Here is a 211-residue protein sequence, read N- to C-terminus: Proteasome subunit beta (211 aa).

A propeptide spans 1–9 (removed in mature form; by autocatalysis); it reads MDNDKYLKG. T10 (nucleophile) is an active-site residue.

This sequence belongs to the peptidase T1B family. The 20S proteasome core is composed of 14 alpha and 14 beta subunits that assemble into four stacked heptameric rings, resulting in a barrel-shaped structure. The two inner rings, each composed of seven catalytic beta subunits, are sandwiched by two outer rings, each composed of seven alpha subunits. The catalytic chamber with the active sites is on the inside of the barrel. Has a gated structure, the ends of the cylinder being occluded by the N-termini of the alpha-subunits. Is capped at one or both ends by the proteasome regulatory ATPase, PAN.

It is found in the cytoplasm. It catalyses the reaction Cleavage of peptide bonds with very broad specificity.. The formation of the proteasomal ATPase PAN-20S proteasome complex, via the docking of the C-termini of PAN into the intersubunit pockets in the alpha-rings, triggers opening of the gate for substrate entry. Interconversion between the open-gate and close-gate conformations leads to a dynamic regulation of the 20S proteasome proteolysis activity. Functionally, component of the proteasome core, a large protease complex with broad specificity involved in protein degradation. The protein is Proteasome subunit beta of Methanosarcina barkeri (strain Fusaro / DSM 804).